A 258-amino-acid polypeptide reads, in one-letter code: uncharacterized protein (258 aa).

Transmembrane regions (helical) follow at residues I24–F44, P70–M90, L100–I120, V130–F150, L157–L177, and F181–A201. H188 is an active-site residue.

The protein belongs to the peptidase S54 family.

The protein localises to the golgi apparatus membrane. This is an uncharacterized protein from Schizosaccharomyces pombe (strain 972 / ATCC 24843) (Fission yeast).